The primary structure comprises 485 residues: Glutamate--tRNA ligase (485 aa).

R6 contacts L-glutamate. The short motif at P9–T19 is the 'HIGH' region element. Residues Y192 and R210 to H214 each bind L-glutamate. The short motif at K248–R252 is the 'KMSKS' region element. K251 contributes to the ATP binding site.

It belongs to the class-I aminoacyl-tRNA synthetase family. Glutamate--tRNA ligase type 1 subfamily. In terms of assembly, monomer. The cofactor is Does not require zinc..

The protein localises to the cytoplasm. It catalyses the reaction tRNA(Glu) + L-glutamate + ATP = L-glutamyl-tRNA(Glu) + AMP + diphosphate. Non-discriminating glutamyl-tRNA synthetase. Catalyzes the attachment of glutamate to tRNA(Glu) in a two-step reaction: glutamate is first activated by ATP to form Glu-AMP and then transferred to the acceptor end of tRNA(Glu). Acylates both tRNA(Glu) and tRNA(Gln) with glutamate, but has 13-fold higher efficiency with tRNA(Glu). The protein is Glutamate--tRNA ligase (gltX) of Thermosynechococcus vestitus (strain NIES-2133 / IAM M-273 / BP-1).